Here is a 468-residue protein sequence, read N- to C-terminus: 6-phospho-beta-galactosidase (468 aa).

Residues glutamine 19, histidine 116, asparagine 159, glutamate 160, and asparagine 297 each coordinate D-galactose 6-phosphate. The Proton donor role is filled by glutamate 160. The active-site Nucleophile is the glutamate 375. D-galactose 6-phosphate is bound by residues serine 428, tryptophan 429, lysine 435, and tyrosine 437.

This sequence belongs to the glycosyl hydrolase 1 family.

The catalysed reaction is a 6-phospho-beta-D-galactoside + H2O = D-galactose 6-phosphate + an alcohol. Its pathway is carbohydrate metabolism; lactose degradation; D-galactose 6-phosphate and beta-D-glucose from lactose 6-phosphate: step 1/1. This is 6-phospho-beta-galactosidase from Streptococcus pyogenes serotype M18 (strain MGAS8232).